We begin with the raw amino-acid sequence, 193 residues long: Ion-translocating oxidoreductase complex subunit A (193 aa).

6 consecutive transmembrane segments (helical) span residues 5–25 (LLLL…FLGL), 39–59 (IGMG…SYLM), 63–83 (ILIP…VIAV), 102–122 (LLGI…VALL), 134–154 (IIYG…FAAM), and 171–191 (SIAM…TGLI).

It belongs to the NqrDE/RnfAE family. The complex is composed of six subunits: RnfA, RnfB, RnfC, RnfD, RnfE and RnfG.

Its subcellular location is the cell inner membrane. Functionally, part of a membrane-bound complex that couples electron transfer with translocation of ions across the membrane. The chain is Ion-translocating oxidoreductase complex subunit A from Aeromonas hydrophila subsp. hydrophila (strain ATCC 7966 / DSM 30187 / BCRC 13018 / CCUG 14551 / JCM 1027 / KCTC 2358 / NCIMB 9240 / NCTC 8049).